We begin with the raw amino-acid sequence, 203 residues long: MPRMSETVPTAAAGRSPQEAEIVAALGDRPVVLIGMMGAGKSTVGRRLALRLGLPFLDADTEIESAAAMTIPEIFETHGEPHFRDGEARVISRLLDGGTKVLATGGGAFMREETRDRIREKAISMWLEAEADVILRRVKRRADRPLLKTPDPAGTIARLIAERYPLYREADITIASRDVPHEKIVDECVAALHDYLCAAPPQP.

38–43 (GAGKST) contributes to the ATP binding site. Mg(2+) is bound at residue Ser42. Substrate is bound by residues Asp60, Arg84, and Gly106. Arg144 is an ATP binding site. Residue Arg163 coordinates substrate.

This sequence belongs to the shikimate kinase family. As to quaternary structure, monomer. Requires Mg(2+) as cofactor.

It localises to the cytoplasm. It catalyses the reaction shikimate + ATP = 3-phosphoshikimate + ADP + H(+). It functions in the pathway metabolic intermediate biosynthesis; chorismate biosynthesis; chorismate from D-erythrose 4-phosphate and phosphoenolpyruvate: step 5/7. Its function is as follows. Catalyzes the specific phosphorylation of the 3-hydroxyl group of shikimic acid using ATP as a cosubstrate. This Rhodopseudomonas palustris (strain ATCC BAA-98 / CGA009) protein is Shikimate kinase.